The primary structure comprises 644 residues: Transcription factor btd (644 aa).

2 disordered regions span residues 16–65 (HQAQ…TQQQ) and 101–196 (APPS…AGSP). 2 stretches are compositionally biased toward low complexity: residues 101 to 119 (APPS…SSPL) and 140 to 196 (ASPN…AGSP). 3 C2H2-type zinc fingers span residues 333 to 357 (HICH…LRWH), 363 to 385 (FLCL…GRTH), and 391 to 413 (YACP…KKTH). Disordered regions lie at residues 437 to 461 (LEKK…QPDT) and 478 to 537 (TSAG…SSSA). 2 stretches are compositionally biased toward low complexity: residues 499–508 (TTTTSSAAAS) and 521–537 (AIQP…SSSA).

The protein resides in the nucleus. Required for the development of the antennal, intercalary and mandibular segments of the head. The chain is Transcription factor btd (btd) from Drosophila melanogaster (Fruit fly).